Here is a 475-residue protein sequence, read N- to C-terminus: Equilibrative nucleoside transporter 3 (475 aa).

At 1 to 51 (MAFASEDNVYHSSNAVYRAPSNHQEADQEALLGKLLDYPAPGLQRPEDRFN) the chain is on the cytoplasmic side. Ser-21 is modified (phosphoserine). The short motif at 31–32 (LL) is the Dileucine internalization motif element. A helical transmembrane segment spans residues 52–72 (GAYIIFFCLGIGGLLPWNFFV). Over 73–105 (TAKEYWAYKLRNCSSPASGEDPEDMDILNYFES) the chain is Extracellular. A glycan (N-linked (GlcNAc...) asparagine) is linked at Asn-84. Residues 106-126 (YLAVASTVPSLLFLVANFLLV) traverse the membrane as a helical segment. The Cytoplasmic segment spans residues 127 to 134 (NRVQVHVR). The helical transmembrane segment at 135-155 (VLASLSVSLAIFVVMIVLVKV) threads the bilayer. Topologically, residues 156 to 162 (DTSSWTR) are extracellular. A helical membrane pass occupies residues 163-183 (GFFSLTIACMAIISSSSTIFN). Residues 184-199 (SSVYGLTGSFPMRNAQ) are Cytoplasmic-facing. A helical transmembrane segment spans residues 200 to 220 (ALISGGAMGGTVSAVALLVDL). Residues 221–230 (AASSDVRDST) lie on the Extracellular side of the membrane. The chain crosses the membrane as a helical span at residues 231-251 (LAFFLMAAVFLGLCMGLYLLL). The Cytoplasmic portion of the chain corresponds to 252-305 (SQLEYARYYMRPVAPVRVFSGEDNPSQDAPSASSVAPASRVMHTPPLGPILKKT). The chain crosses the membrane as a helical span at residues 306 to 326 (ASLGFCAVSLYFVTAFIIPAI). Residues 327 to 340 (STNIQSMHKGTGSP) are Extracellular-facing. A helical membrane pass occupies residues 341 to 361 (WTSKFFVPLTVFLLFNFADLC). At 362 to 377 (GRQVTAWIQVPGPRSK) the chain is on the cytoplasmic side. Residues 378-398 (LLPGLVVSRFCLVPLFLLCNY) form a helical membrane-spanning segment. Over 399–415 (QPRSHLTKVLFQSDIYP) the chain is Extracellular. A helical membrane pass occupies residues 416 to 436 (VLFTCLLGLSNGYLSTLVLIY). Residues 437–450 (GPKIVPRELAEATS) are Cytoplasmic-facing. The chain crosses the membrane as a helical span at residues 451–471 (VVMLFYMSVGLMLGSACAALL). Over 472–475 (EHFI) the chain is Extracellular.

Belongs to the SLC29A/ENT transporter (TC 2.A.57) family. As to expression, expressed in macrophages.

Its subcellular location is the lysosome membrane. The protein resides in the late endosome membrane. The protein localises to the mitochondrion membrane. It localises to the cell membrane. The catalysed reaction is adenosine(in) = adenosine(out). The enzyme catalyses guanosine(in) = guanosine(out). It catalyses the reaction inosine(in) = inosine(out). It carries out the reaction uridine(out) = uridine(in). The catalysed reaction is cytidine(in) = cytidine(out). The enzyme catalyses thymidine(in) = thymidine(out). It catalyses the reaction 2'-deoxyadenosine(in) = 2'-deoxyadenosine(out). It carries out the reaction 2'-deoxycytidine(in) = 2'-deoxycytidine(out). The catalysed reaction is guanine(out) = guanine(in). The enzyme catalyses uracil(in) = uracil(out). It catalyses the reaction (R)-noradrenaline(out) = (R)-noradrenaline(in). It carries out the reaction dopamine(out) = dopamine(in). The catalysed reaction is serotonin(out) = serotonin(in). The enzyme catalyses tyramine(in) = tyramine(out). It catalyses the reaction ATP(in) = ATP(out). Functionally, uniporter that mediates the facilitative transport of nucleoside across lysosomal and mitochondrial membranes. Functions as a non-electrogenic Na(+)-independent transporter. Substrate transport is pH-dependent and enhanced under acidic condition, probably reflecting the location of the transporter in acidic intracellular compartments. Proton is not a cotransporting ion but most likely change the ionization state of the transporter which dictates transport-permissible/impermissible conformation for nucleoside translocation. May direct the nucleoside transport from lysosomes to cytosol or cytosol to mitochondria to facilitate the fundamental function of salvage synthesis of nucleic acids. Involved in the transport of nucleosides (adenosine, guanosine, uridine, thymidine, cytidine and inosine) and deoxynucleosides (deoxyadenosine, deoxycytidine). Also mediates transport of purine nucleobases (adenine, guanine), and pyrimidine nucleobases (uracil). Also able to transport monoamine neurotransmitters dopamine, serotonin, noradrenaline and tyramine. Capable of transporting ATP. Mediates nucleoside export from lysosomes in macrophages, which regulates macrophage functions and numbers. The chain is Equilibrative nucleoside transporter 3 from Mus musculus (Mouse).